Reading from the N-terminus, the 328-residue chain is Transcription initiation factor IIE subunit beta (328 aa).

The disordered stretch occupies residues 32–105; that stretch reads QKKTNDTVIT…SSPSKKVRPG (74 aa). Position 52 is a phosphoserine (Ser-52). Residues 85-94 are compositionally biased toward acidic residues; that stretch reads LDDDDDDEDF. A phosphoserine mark is found at Ser-97 and Ser-106. Residues 113–187 constitute a DNA-binding region (TFIIE beta); the sequence is QANQTDISKS…FKYLSTYDVH (75 aa).

This sequence belongs to the TFIIE beta subunit family. TFIIE is a tetramer of two alpha (TFA1) and two beta (TFA2) subunits.

The protein localises to the nucleus. In terms of biological role, recruits TFIIH to the initiation complex and stimulates the RNA polymerase II C-terminal domain kinase and DNA-dependent ATPase activities of TFIIH. Both TFIIH and TFIIE are required for promoter clearance by RNA polymerase. This chain is Transcription initiation factor IIE subunit beta (TFA2), found in Saccharomyces cerevisiae (strain ATCC 204508 / S288c) (Baker's yeast).